Consider the following 284-residue polypeptide: Bifunctional protein FolD (284 aa).

Residues 165 to 167 (GRG), T192, and V233 each bind NADP(+).

Belongs to the tetrahydrofolate dehydrogenase/cyclohydrolase family. Homodimer.

The catalysed reaction is (6R)-5,10-methylene-5,6,7,8-tetrahydrofolate + NADP(+) = (6R)-5,10-methenyltetrahydrofolate + NADPH. It carries out the reaction (6R)-5,10-methenyltetrahydrofolate + H2O = (6R)-10-formyltetrahydrofolate + H(+). The protein operates within one-carbon metabolism; tetrahydrofolate interconversion. Its function is as follows. Catalyzes the oxidation of 5,10-methylenetetrahydrofolate to 5,10-methenyltetrahydrofolate and then the hydrolysis of 5,10-methenyltetrahydrofolate to 10-formyltetrahydrofolate. The chain is Bifunctional protein FolD from Corynebacterium glutamicum (strain R).